The primary structure comprises 479 residues: Flap endonuclease 1 (479 aa).

Residues 1–106 are N-domain; that stretch reads MGIKGLTKFI…SELEKRGEKR (106 aa). Position 34 (Asp34) interacts with Mg(2+). Positions 47 and 72 each coordinate DNA. Mg(2+) is bound by residues Asp88, Glu160, Glu162, Asp181, and Asp183. The segment at 124-266 is I-domain; it reads EIKKQSGRTV…KTAYNLIKEY (143 aa). Residue Glu160 coordinates DNA. Gly244 and Asp246 together coordinate DNA. Mg(2+) is bound at residue Asp246. The tract at residues 349–357 is interaction with PCNA; it reads TQRRLDTFF. The segment at 379-455 is disordered; sequence AKGKGKKREL…NSDSGNIKNE (77 aa). Positions 403-428 are enriched in basic and acidic residues; sequence NIKDEKKNTDKMDELKNKSDENFVKD.

The protein belongs to the XPG/RAD2 endonuclease family. FEN1 subfamily. As to quaternary structure, interacts with PCNA. Three molecules of FEN1 bind to one PCNA trimer with each molecule binding to one PCNA monomer. PCNA stimulates the nuclease activity without altering cleavage specificity. It depends on Mg(2+) as a cofactor. In terms of processing, phosphorylated. Phosphorylation upon DNA damage induces relocalization to the nuclear plasma.

The protein localises to the nucleus. The protein resides in the nucleolus. It is found in the nucleoplasm. It localises to the mitochondrion. Its function is as follows. Structure-specific nuclease with 5'-flap endonuclease and 5'-3' exonuclease activities involved in DNA replication and repair. During DNA replication, cleaves the 5'-overhanging flap structure that is generated by displacement synthesis when DNA polymerase encounters the 5'-end of a downstream Okazaki fragment. It enters the flap from the 5'-end and then tracks to cleave the flap base, leaving a nick for ligation. Also involved in the long patch base excision repair (LP-BER) pathway, by cleaving within the apurinic/apyrimidinic (AP) site-terminated flap. Acts as a genome stabilization factor that prevents flaps from equilibrating into structures that lead to duplications and deletions. Also possesses 5'-3' exonuclease activity on nicked or gapped double-stranded DNA, and exhibits RNase H activity. Also involved in replication and repair of rDNA and in repairing mitochondrial DNA. The chain is Flap endonuclease 1 from Plasmodium chabaudi chabaudi.